We begin with the raw amino-acid sequence, 538 residues long: MARYIFVTGGVVSSLGKGLSSASLAYLLQSRGYKVRIRKLDPYLNVDPGTMSPFQHGEVFVTDDGAETDLDLGHYERFSGVSAKKSDNITTGKIYSDVLRKERKGEYLGKTVQVIPHITDRIKQFIKHDSSKEDFVICEIGGIVGDIESLPFVEAIRQFANDVGKKNALFIHLTLVPYLKASDEIKTKPTQHSVKELRSIGIQPDIIICRSERPIPLDHRKKISLFCNVDIKNVIETVDVRTIYEAPMSFFKEKLDLQVLNYFKLKSKKPANLNPWKKITKIILHNKKQVNIAIIGKYVELKDAYKSLDEALTHGGIDNKVKVNLVRIDSEKLKISEIKKKLKNISGILIPGGFGKRGTDGKIEAIKHARLNKIPFLGICYGMQMAIIEFARNQLNLKNATSSEFDKKGLPIIGLINEWTKDGKKIKGTDKDLGGTMRLGSYDAKLKDNSKISKIYKSKLIKERHRHRYEVNIAFKDKFEKKGMIFSGLSPDNKLPEIIELKNHPWFIGVQFHPEFKSRPLAPHPLFSSFIKAAKNHK.

Residues 1–265 (MARYIFVTGG…DLQVLNYFKL (265 aa)) are amidoligase domain. Residue serine 13 coordinates CTP. Serine 13 contributes to the UTP binding site. ATP contacts are provided by residues 14–19 (SLGKGL) and aspartate 71. Mg(2+) is bound by residues aspartate 71 and glutamate 139. CTP is bound by residues 146–148 (DIE), 186–191 (KTKPTQ), and lysine 222. Residues 186–191 (KTKPTQ) and lysine 222 contribute to the UTP site. The 248-residue stretch at 291–538 (NIAIIGKYVE…SFIKAAKNHK (248 aa)) folds into the Glutamine amidotransferase type-1 domain. Glycine 353 serves as a coordination point for L-glutamine. Residue cysteine 380 is the Nucleophile; for glutamine hydrolysis of the active site. L-glutamine contacts are provided by residues 381-384 (YGMQ), glutamate 404, and arginine 468. Active-site residues include histidine 513 and glutamate 515.

It belongs to the CTP synthase family. Homotetramer.

The catalysed reaction is UTP + L-glutamine + ATP + H2O = CTP + L-glutamate + ADP + phosphate + 2 H(+). It carries out the reaction L-glutamine + H2O = L-glutamate + NH4(+). The enzyme catalyses UTP + NH4(+) + ATP = CTP + ADP + phosphate + 2 H(+). It participates in pyrimidine metabolism; CTP biosynthesis via de novo pathway; CTP from UDP: step 2/2. With respect to regulation, allosterically activated by GTP, when glutamine is the substrate; GTP has no effect on the reaction when ammonia is the substrate. The allosteric effector GTP functions by stabilizing the protein conformation that binds the tetrahedral intermediate(s) formed during glutamine hydrolysis. Inhibited by the product CTP, via allosteric rather than competitive inhibition. Functionally, catalyzes the ATP-dependent amination of UTP to CTP with either L-glutamine or ammonia as the source of nitrogen. Regulates intracellular CTP levels through interactions with the four ribonucleotide triphosphates. The chain is CTP synthase from Pelagibacter ubique (strain HTCC1062).